A 259-amino-acid chain; its full sequence is Deoxyribose-phosphate aldolase (259 aa).

Residue aspartate 101 is the Proton donor/acceptor of the active site. The Schiff-base intermediate with acetaldehyde role is filled by lysine 166. Lysine 200 (proton donor/acceptor) is an active-site residue.

This sequence belongs to the DeoC/FbaB aldolase family. DeoC type 2 subfamily.

It localises to the cytoplasm. The catalysed reaction is 2-deoxy-D-ribose 5-phosphate = D-glyceraldehyde 3-phosphate + acetaldehyde. It participates in carbohydrate degradation; 2-deoxy-D-ribose 1-phosphate degradation; D-glyceraldehyde 3-phosphate and acetaldehyde from 2-deoxy-alpha-D-ribose 1-phosphate: step 2/2. Catalyzes a reversible aldol reaction between acetaldehyde and D-glyceraldehyde 3-phosphate to generate 2-deoxy-D-ribose 5-phosphate. This is Deoxyribose-phosphate aldolase from Glaesserella parasuis serovar 5 (strain SH0165) (Haemophilus parasuis).